The following is a 330-amino-acid chain: Aspartate--ammonia ligase (330 aa).

Belongs to the class-II aminoacyl-tRNA synthetase family. AsnA subfamily.

It is found in the cytoplasm. The catalysed reaction is L-aspartate + NH4(+) + ATP = L-asparagine + AMP + diphosphate + H(+). The protein operates within amino-acid biosynthesis; L-asparagine biosynthesis; L-asparagine from L-aspartate (ammonia route): step 1/1. This chain is Aspartate--ammonia ligase, found in Shigella sonnei (strain Ss046).